The chain runs to 359 residues: RuBisCO accumulation factor 1 (359 aa).

An N-terminal alpha-helix region spans residues 12-195 (LSPEETDALF…RQKIEQLLSD (184 aa)). The interval 219-345 (PLLIPVAGSL…VLLVMRPKKI (127 aa)) is C-terminal beta-sheet.

The protein belongs to the RAF family. Homodimer. Forms an RbcL(8)-Raf1(8) complex. Forms complexes of many stoichiometries with RbcL with and without RbcS. RbcX and Raf1 can bind simultaneously to RbcL.

The protein localises to the cytoplasm. Functionally, a major RuBisCO chaperone. Acts after GroEL-GroES chaperonin to fold and/or assemble the large subunit of RuBisCO (ccbL, rbcL). Cooperates with RbcX in RbcL folding, plays the major role in assembly of dimers into RbcL(8)-Raf1(8) intermediate complexes. RbcS replaces Raf1, leading to holoenzyme formation. In terms of biological role, raf1 and RbcX are probably functionally redundant; it has been suggested they may cooperate. This Picosynechococcus sp. (strain ATCC 27264 / PCC 7002 / PR-6) (Agmenellum quadruplicatum) protein is RuBisCO accumulation factor 1.